The primary structure comprises 361 residues: Chorismate synthase (361 aa).

The NADP(+) site is built by R48 and R54. FMN contacts are provided by residues 125–127, 238–239, G278, 293–297, and R319; these read RSS, NA, and KPTSS.

This sequence belongs to the chorismate synthase family. As to quaternary structure, homotetramer. FMNH2 is required as a cofactor.

It catalyses the reaction 5-O-(1-carboxyvinyl)-3-phosphoshikimate = chorismate + phosphate. It functions in the pathway metabolic intermediate biosynthesis; chorismate biosynthesis; chorismate from D-erythrose 4-phosphate and phosphoenolpyruvate: step 7/7. Its function is as follows. Catalyzes the anti-1,4-elimination of the C-3 phosphate and the C-6 proR hydrogen from 5-enolpyruvylshikimate-3-phosphate (EPSP) to yield chorismate, which is the branch point compound that serves as the starting substrate for the three terminal pathways of aromatic amino acid biosynthesis. This reaction introduces a second double bond into the aromatic ring system. The sequence is that of Chorismate synthase from Vibrio vulnificus (strain YJ016).